Here is a 692-residue protein sequence, read N- to C-terminus: Centrosomal protein of 83 kDa (692 aa).

2 coiled-coil regions span residues 32 to 625 (RCEH…SLIL) and 656 to 689 (HLQEEQHQRELSLLRKRLEELETTQRKQLEELGS). Ser-689 bears the Phosphoserine mark.

The protein belongs to the CEP83 family. Interacts with CEP164 and IFT20.

It localises to the cytoplasm. The protein resides in the cytoskeleton. Its subcellular location is the microtubule organizing center. It is found in the centrosome. The protein localises to the centriole. Component of the distal appendage region of the centriole involved in the initiation of primary cilium assembly. May collaborate with IFT20 in the trafficking of ciliary membrane proteins from the Golgi complex to the cilium during the initiation of primary cilium assembly. This chain is Centrosomal protein of 83 kDa (Cep83), found in Mus musculus (Mouse).